Consider the following 307-residue polypeptide: Small ribosomal subunit biogenesis GTPase RsgA (307 aa).

Residues lysine 80–phenylalanine 237 enclose the CP-type G domain. GTP contacts are provided by residues asparagine 129 to aspartate 132 and glycine 180 to serine 188. Zn(2+) contacts are provided by cysteine 261, cysteine 266, histidine 268, and cysteine 274.

Belongs to the TRAFAC class YlqF/YawG GTPase family. RsgA subfamily. As to quaternary structure, monomer. Associates with 30S ribosomal subunit, binds 16S rRNA. Zn(2+) is required as a cofactor.

It is found in the cytoplasm. In terms of biological role, one of several proteins that assist in the late maturation steps of the functional core of the 30S ribosomal subunit. Helps release RbfA from mature subunits. May play a role in the assembly of ribosomal proteins into the subunit. Circularly permuted GTPase that catalyzes slow GTP hydrolysis, GTPase activity is stimulated by the 30S ribosomal subunit. The protein is Small ribosomal subunit biogenesis GTPase RsgA of Borreliella afzelii (strain PKo) (Borrelia afzelii).